The chain runs to 191 residues: Orotate phosphoribosyltransferase (191 aa).

116–124 provides a ligand contact to 5-phospho-alpha-D-ribose 1-diphosphate; it reads EDVVTTGGS. Residues T120 and R148 each coordinate orotate.

Belongs to the purine/pyrimidine phosphoribosyltransferase family. PyrE subfamily. Homodimer. Mg(2+) is required as a cofactor.

The enzyme catalyses orotidine 5'-phosphate + diphosphate = orotate + 5-phospho-alpha-D-ribose 1-diphosphate. It participates in pyrimidine metabolism; UMP biosynthesis via de novo pathway; UMP from orotate: step 1/2. In terms of biological role, catalyzes the transfer of a ribosyl phosphate group from 5-phosphoribose 1-diphosphate to orotate, leading to the formation of orotidine monophosphate (OMP). The sequence is that of Orotate phosphoribosyltransferase from Carboxydothermus hydrogenoformans (strain ATCC BAA-161 / DSM 6008 / Z-2901).